Here is a 511-residue protein sequence, read N- to C-terminus: Prolyl 3-hydroxylase OGFOD1 (511 aa).

The interval 1–20 (MTGKRGTAAGTDGSGNKKGK) is disordered. Residues 138–240 (KTVDISCAQY…RLSVSGWFHG (103 aa)) enclose the Fe2OG dioxygenase domain. Positions 156 and 158 each coordinate Fe cation. Tyr170 provides a ligand contact to 2-oxoglutarate. His219 is a binding site for Fe cation. Residue Arg231 participates in 2-oxoglutarate binding. The disordered stretch occupies residues 372-403 (NEESDEGEGPSEPNTVSQQGASSEDDKVPSCS).

This sequence belongs to the TPA1 family. As to quaternary structure, monomer. Fe(2+) is required as a cofactor. The cofactor is L-ascorbate.

Its subcellular location is the cytoplasm. The protein localises to the nucleus. The catalysed reaction is [ribosomal protein uS12]-L-proline + 2-oxoglutarate + O2 = [ribosomal protein uS12]-(3S)-3-hydroxy-L-proline + succinate + CO2. Its function is as follows. Prolyl 3-hydroxylase that catalyzes 3-hydroxylation of 'Pro-62' of small ribosomal subunit uS12 (rps23), thereby regulating protein translation termination efficiency. Involved in stress granule formation. The sequence is that of Prolyl 3-hydroxylase OGFOD1 (ogfod1) from Xenopus laevis (African clawed frog).